The chain runs to 478 residues: PRAME family member 4 (478 aa).

Residues 99–126 (RWKLQVLDLQDVCENFWMVWSEAMAHGC) form an LRR 1; degenerate repeat. The LRR 2; degenerate repeat unit spans residues 181–205 (HLCCKKLKILGMPFRNIRSILKMVN). The stretch at 206-232 (LDCIQEVEVNCKWVLPILTQFTPYLGH) is one LRR 3; degenerate repeat. One copy of the LRR 4; degenerate repeat lies at 233–268 (MRNLQKLILSHMDVSRYVSPEQKKEIVTQFTTQFLK). LRR repeat units lie at residues 269-294 (LRCL…LSCL), 295-326 (KTSL…SQLK), 327-347 (TLDL…QILL), 351-378 (AATL…ALSR), and 379-403 (CFEL…LLSH).

It belongs to the PRAME family.

This is PRAME family member 4 from Homo sapiens (Human).